Reading from the N-terminus, the 472-residue chain is MEEINKTPKQIVAALDNYVIGQNQAKKAVAIALRNRYRRMELSAEMQEEITPKNMLMIGPTGVGKTEIARRLAKIVHAPFVKVEATKFTEVGYVGRDVESMVRDLVDVAIEMEKQQAYSGVRAQAVQAADKRLVKLLVPAQKKQAKNNGNEFQNMMNMFSQMQNGQTPNVDDSSNEEVTDEVRNQRLSVADQLKTGRLENSEVTIEMDDPQQAAAGNNNMLGQMGIDLGDSLGALMPKKRIQRTMPVSEAREILVREESEKLVNNADIYHDAIVRAENTGIIFIDEIDKITKGGQQGSGEVSREGVQRDILPIVEGSQISTKYGPINTDHILFIASGAFAESKPSDLIAELQGRFPIRVELDDLSKDDFVKILTEPKNALIKQYIALIGTDNIKVTFTIEAIEAIATIAYKVNHETQNIGARRLHTILEKLLEELLYEGPDMEMGEVTITESYVNERIGNIAQDKDLSRYIL.

Residues Ile-20, 62-67 (GVGKTE), Asp-285, Glu-350, and Arg-422 each bind ATP.

The protein belongs to the ClpX chaperone family. HslU subfamily. A double ring-shaped homohexamer of HslV is capped on each side by a ring-shaped HslU homohexamer. The assembly of the HslU/HslV complex is dependent on binding of ATP.

The protein resides in the cytoplasm. Its function is as follows. ATPase subunit of a proteasome-like degradation complex; this subunit has chaperone activity. The binding of ATP and its subsequent hydrolysis by HslU are essential for unfolding of protein substrates subsequently hydrolyzed by HslV. HslU recognizes the N-terminal part of its protein substrates and unfolds these before they are guided to HslV for hydrolysis. This is ATP-dependent protease ATPase subunit HslU from Lactiplantibacillus plantarum (strain ATCC BAA-793 / NCIMB 8826 / WCFS1) (Lactobacillus plantarum).